A 153-amino-acid chain; its full sequence is MAEHLMNDVPFWQSKTLDEMSDAEWESLCDGCGQCCLHKLMDEDTDEIYFTNVACRQLNIKTCQCRNYERRFEFEPDCIKLTRENLPTFEWLPMTCAYRLLAEGKDLPVWHPLLTGSKAAMHGERISVRHIAVKESEVIDWQDHILNKPDWAQ.

It belongs to the UPF0260 family.

The sequence is that of UPF0260 protein YcgN from Shigella boydii serotype 18 (strain CDC 3083-94 / BS512).